The following is a 481-amino-acid chain: MKHKGIVLKLTKSKAIISTNDFQCYYIKRSPTIYVGKEVEFTNKDIVTKKSVLIKPALSVACFILLIACVLSLSKIINNISPKVFAYISVDINPSFEIEIDDMGNVLNLLPLNDDAKVIADKLEIDKINVSNAIDIIINEAIKSNVINENEKDFILVSSTLNIKKEENSQQYQSEKEKLDIIINSLKDSIEKSGKADVYIVQADVNEREAARSKGISTGRYVLYNKYKDLENDLSLEDAKDADVNVLIKSMLDVASEERNPEESPKMTPTPTPTHTATHTPTDAPTPKPANTPTSTPAAKPSPKTASNSASTSTPAPKPTSTPTPTLMPTPTPTPTPADKIAYGQFMKFESSNYRGYYIRVKSFSGRIDPYVNPVEDSMFKIVPGLADPSCISFESKTYPGYYLKHENFRVILKKYEDTDLFREDATFRVVPGWADENMISFQSYNYPYRYIRHRDFELYIENIKTDLDRKDATFIGIKVD.

Residues 1–50 (MKHKGIVLKLTKSKAIISTNDFQCYYIKRSPTIYVGKEVEFTNKDIVTKK) are Cytoplasmic-facing. The 48-residue stretch at 3–50 (HKGIVLKLTKSKAIISTNDFQCYYIKRSPTIYVGKEVEFTNKDIVTKK) folds into the RsgI N-terminal anti-sigma domain. Residues 51–71 (SVLIKPALSVACFILLIACVL) form a helical membrane-spanning segment. Residues 72-481 (SLSKIINNIS…DATFIGIKVD (410 aa)) are Extracellular-facing. Residues 255–339 (ASEERNPEES…TPTPTPTPAD (85 aa)) are disordered. Over residues 256-265 (SEERNPEESP) the composition is skewed to basic and acidic residues. 2 stretches are compositionally biased toward low complexity: residues 266–283 (KMTPTPTPTHTATHTPTD) and 291–315 (NTPTSTPAAKPSPKTASNSASTSTP). Residues 316–336 (APKPTSTPTPTLMPTPTPTPT) show a composition bias toward pro residues.

In terms of assembly, interacts (via RsgI N-terminal anti-sigma domain) with SigI5.

Its subcellular location is the cell membrane. In terms of biological role, anti-sigma factor for SigI5. Negatively regulates SigI5 activity through direct interaction. Binding of the polysaccharide substrate to the extracellular C-terminal sensing domain of RsgI5 may induce a conformational change in its N-terminal cytoplasmic region, leading to the release and activation of SigI5. In Acetivibrio thermocellus (strain ATCC 27405 / DSM 1237 / JCM 9322 / NBRC 103400 / NCIMB 10682 / NRRL B-4536 / VPI 7372) (Clostridium thermocellum), this protein is Anti-sigma-I factor RsgI5.